Consider the following 406-residue polypeptide: 2-epi-valiolone synthase (406 aa).

The segment at 1 to 21 (MPSTGSTPILAHDVKSPHRGS) is disordered. NAD(+)-binding positions include 105–108 (EPSK), 137–141 (GVLCD), 161–162 (TS), lysine 174, lysine 183, and 201–204 (CLAT). Positions 216, 287, and 304 each coordinate Zn(2+).

The protein belongs to the sugar phosphate cyclases superfamily. EVS family. The cofactor is NAD(+). Co(2+) serves as cofactor. Zn(2+) is required as a cofactor.

It carries out the reaction D-sedoheptulose 7-phosphate = 2-epi-valiolone + phosphate. In terms of biological role, catalyzes the conversion of sedoheptulose 7-phosphate to 2-epi-valiolone, which may serve as an alternative precursor for aminocyclitol biosynthesis. This is 2-epi-valiolone synthase from Stigmatella aurantiaca (strain DW4/3-1).